A 425-amino-acid polypeptide reads, in one-letter code: Monoacylglycerol lipase ABHD2 (425 aa).

Over 1 to 9 (MNAMLETPE) the chain is Cytoplasmic. Residues 10–30 (LPAVFDGVKLAAVAAVLYVIV) form a helical; Signal-anchor for type II membrane protein membrane-spanning segment. The Extracellular segment spans residues 31–425 (RCLNLKSPTA…DTEQMEAELE (395 aa)). In terms of domain architecture, AB hydrolase-1 spans 128–382 (MVICPGIANH…HGGHLGFFEG (255 aa)). The N-linked (GlcNAc...) asparagine glycan is linked to Asn-136. Residue Ser-207 is the Nucleophile of the active site. Residues Asp-345 and His-376 each act as charge relay system in the active site. Residue Asn-410 is glycosylated (N-linked (GlcNAc...) asparagine).

It belongs to the AB hydrolase superfamily. AB hydrolase 4 family. Widely expressed with higher expression in testis. Expressed by vascular smooth muscle cells, non vascular smooth muscle cells and heart.

It is found in the cell membrane. The protein localises to the cytoplasmic vesicle. It localises to the secretory vesicle. Its subcellular location is the acrosome membrane. It carries out the reaction Hydrolyzes glycerol monoesters of long-chain fatty acids.. The catalysed reaction is an acetyl ester + H2O = an aliphatic alcohol + acetate + H(+). The enzyme catalyses a triacylglycerol + H2O = a diacylglycerol + a fatty acid + H(+). It catalyses the reaction 2-(5Z,8Z,11Z,14Z-eicosatetraenoyl)-glycerol + H2O = glycerol + (5Z,8Z,11Z,14Z)-eicosatetraenoate + H(+). It carries out the reaction a butanoate ester + H2O = an aliphatic alcohol + butanoate + H(+). The catalysed reaction is hexadecanoate ester + H2O = an aliphatic alcohol + hexadecanoate + H(+). Acylglycerol lipase activity is activated upon binding to progesterone. Progesterone-dependent acylglycerol lipase that catalyzes hydrolysis of endocannabinoid arachidonoylglycerol (AG) from cell membrane. Acts as a progesterone receptor: progesterone-binding activates the acylglycerol lipase activity, mediating degradation of 1-arachidonoylglycerol (1AG) and 2-arachidonoylglycerol (2AG) to glycerol and arachidonic acid (AA). Also displays an ester hydrolase activity against acetyl ester, butanoate ester and hexadecanoate ester. Plays a key role in sperm capacitation in response to progesterone by mediating degradation of 2AG, an inhibitor of the sperm calcium channel CatSper, leading to calcium influx via CatSper and sperm activation. Involved in acrosomal reaction. May also play a role in smooth muscle cells migration. The protein is Monoacylglycerol lipase ABHD2 (Abhd2) of Mus musculus (Mouse).